Reading from the N-terminus, the 109-residue chain is Large ribosomal subunit protein uL24 (109 aa).

This sequence belongs to the universal ribosomal protein uL24 family. As to quaternary structure, part of the 50S ribosomal subunit.

One of two assembly initiator proteins, it binds directly to the 5'-end of the 23S rRNA, where it nucleates assembly of the 50S subunit. In terms of biological role, one of the proteins that surrounds the polypeptide exit tunnel on the outside of the subunit. This chain is Large ribosomal subunit protein uL24, found in Hamiltonella defensa subsp. Acyrthosiphon pisum (strain 5AT).